The primary structure comprises 383 residues: ATP phosphoribosyltransferase regulatory subunit (383 aa).

This sequence belongs to the class-II aminoacyl-tRNA synthetase family. HisZ subfamily. In terms of assembly, heteromultimer composed of HisG and HisZ subunits.

It localises to the cytoplasm. It participates in amino-acid biosynthesis; L-histidine biosynthesis; L-histidine from 5-phospho-alpha-D-ribose 1-diphosphate: step 1/9. Required for the first step of histidine biosynthesis. May allow the feedback regulation of ATP phosphoribosyltransferase activity by histidine. This Desulfitobacterium hafniense (strain DSM 10664 / DCB-2) protein is ATP phosphoribosyltransferase regulatory subunit.